The sequence spans 295 residues: Iodotyrosine deiodinase (295 aa).

Residues valine 3 to phenylalanine 23 form a helical membrane-spanning segment. Residues lysine 29–proline 81 are disordered. Over residues glutamate 63–glutamate 75 the composition is skewed to acidic residues. Residues arginine 106 to arginine 110, serine 134, and serine 134 to glycine 135 contribute to the FMN site. Residues alanine 136, glutamate 163, tyrosine 167, and lysine 188 each contribute to the 3-iodo-L-tyrosine site. FMN-binding positions include threonine 243–threonine 245 and arginine 285.

The protein belongs to the nitroreductase family. Requires FMN as cofactor.

It localises to the membrane. It carries out the reaction 2 iodide + L-tyrosine + 2 NADP(+) = 3,5-diiodo-L-tyrosine + 2 NADPH + H(+). The enzyme catalyses iodide + L-tyrosine + NADP(+) = 3-iodo-L-tyrosine + NADPH. It catalyses the reaction 3-iodo-L-tyrosine + iodide + NADP(+) = 3,5-diiodo-L-tyrosine + NADPH + H(+). The catalysed reaction is L-tyrosine + chloride + NADP(+) = 3-chloro-L-tyrosine + NADPH. It carries out the reaction bromide + L-tyrosine + NADP(+) = 3-bromo-L-tyrosine + NADPH. Catalyzes the dehalogenation of halotyrosines such as 3,5-diiodo-L-tyrosine. Likely to also catalyze the dehalogenation of other halotyrosines such as 3-bromo-L-tyrosine, 3-chloro-L-tyrosine and 3-iodo-L-tyrosine. The chain is Iodotyrosine deiodinase (iyd) from Danio rerio (Zebrafish).